Reading from the N-terminus, the 237-residue chain is Ribose-5-phosphate isomerase A (237 aa).

Residues 28-31 (SGST), 83-86 (DGAD), and 97-100 (KGRG) each bind substrate. Glutamate 106 acts as the Proton acceptor in catalysis. Lysine 124 serves as a coordination point for substrate.

The protein belongs to the ribose 5-phosphate isomerase family. In terms of assembly, homodimer.

It carries out the reaction aldehydo-D-ribose 5-phosphate = D-ribulose 5-phosphate. It functions in the pathway carbohydrate degradation; pentose phosphate pathway; D-ribose 5-phosphate from D-ribulose 5-phosphate (non-oxidative stage): step 1/1. Catalyzes the reversible conversion of ribose-5-phosphate to ribulose 5-phosphate. The polypeptide is Ribose-5-phosphate isomerase A (Thermomicrobium roseum (strain ATCC 27502 / DSM 5159 / P-2)).